A 684-amino-acid chain; its full sequence is Leishmanolysin-like peptidase (684 aa).

Position 257 (His-257) interacts with Zn(2+). The active site involves Glu-258. Residues His-261 and His-364 each contribute to the Zn(2+) site.

It belongs to the peptidase M8 family. The cofactor is Zn(2+).

The protein resides in the cytoplasm. Its function is as follows. Essential for the coordination of mitotic progression, and also plays a role in cell migration. The protein is Leishmanolysin-like peptidase of Drosophila pseudoobscura pseudoobscura (Fruit fly).